The sequence spans 245 residues: 4-hydroxy-tetrahydrodipicolinate reductase (245 aa).

NAD(+) is bound by residues 7–12 (GAKGKV), 75–77 (GTT), and 102–105 (APNF). His-132 acts as the Proton donor/acceptor in catalysis. His-133 lines the (S)-2,3,4,5-tetrahydrodipicolinate pocket. The Proton donor role is filled by Lys-136. Residue 142–143 (GT) coordinates (S)-2,3,4,5-tetrahydrodipicolinate.

The protein belongs to the DapB family.

It localises to the cytoplasm. It carries out the reaction (S)-2,3,4,5-tetrahydrodipicolinate + NAD(+) + H2O = (2S,4S)-4-hydroxy-2,3,4,5-tetrahydrodipicolinate + NADH + H(+). The catalysed reaction is (S)-2,3,4,5-tetrahydrodipicolinate + NADP(+) + H2O = (2S,4S)-4-hydroxy-2,3,4,5-tetrahydrodipicolinate + NADPH + H(+). It functions in the pathway amino-acid biosynthesis; L-lysine biosynthesis via DAP pathway; (S)-tetrahydrodipicolinate from L-aspartate: step 4/4. Catalyzes the conversion of 4-hydroxy-tetrahydrodipicolinate (HTPA) to tetrahydrodipicolinate. The chain is 4-hydroxy-tetrahydrodipicolinate reductase from Mycobacterium bovis (strain ATCC BAA-935 / AF2122/97).